Here is a 503-residue protein sequence, read N- to C-terminus: ATP synthase subunit beta (503 aa).

Residue 157-164 (GGAGVGKT) participates in ATP binding.

The protein belongs to the ATPase alpha/beta chains family. As to quaternary structure, F-type ATPases have 2 components, CF(1) - the catalytic core - and CF(0) - the membrane proton channel. CF(1) has five subunits: alpha(3), beta(3), gamma(1), delta(1), epsilon(1). CF(0) has three main subunits: a(1), b(2) and c(9-12). The alpha and beta chains form an alternating ring which encloses part of the gamma chain. CF(1) is attached to CF(0) by a central stalk formed by the gamma and epsilon chains, while a peripheral stalk is formed by the delta and b chains.

The protein resides in the cell membrane. The catalysed reaction is ATP + H2O + 4 H(+)(in) = ADP + phosphate + 5 H(+)(out). Functionally, produces ATP from ADP in the presence of a proton gradient across the membrane. The catalytic sites are hosted primarily by the beta subunits. This chain is ATP synthase subunit beta, found in Christiangramia forsetii (strain DSM 17595 / CGMCC 1.15422 / KT0803) (Gramella forsetii).